We begin with the raw amino-acid sequence, 77 residues long: U14-theraphotoxin-Cg1a 1 (77 aa).

Positions 1–21 are cleaved as a signal peptide; sequence MKTSVLLVILGIAAITVQCTA. Positions 22-49 are excised as a propeptide; sequence SESVEQDSLRTFVDAVLGWNAEMASEAR. 3 disulfide bridges follow: cysteine 50-cysteine 64, cysteine 57-cysteine 69, and cysteine 63-cysteine 75. Lysine 77 is subject to Lysine amide.

Belongs to the neurotoxin 10 (Hwtx-1) family. 65 (Jztx-21) subfamily. In terms of tissue distribution, expressed by the venom gland.

The protein localises to the secreted. Its function is as follows. Probable ion channel inhibitor. This is U14-theraphotoxin-Cg1a 1 from Chilobrachys guangxiensis (Chinese earth tiger tarantula).